Reading from the N-terminus, the 119-residue chain is UPF0102 protein CGSHiGG_01960 (119 aa).

Belongs to the UPF0102 family.

In Haemophilus influenzae (strain PittGG), this protein is UPF0102 protein CGSHiGG_01960.